We begin with the raw amino-acid sequence, 259 residues long: Ribose-5-phosphate isomerase (259 aa).

This sequence belongs to the ribose 5-phosphate isomerase family.

The protein resides in the cytoplasm. The enzyme catalyses aldehydo-D-ribose 5-phosphate = D-ribulose 5-phosphate. Its pathway is carbohydrate degradation; pentose phosphate pathway; D-ribose 5-phosphate from D-ribulose 5-phosphate (non-oxidative stage): step 1/1. In Vanderwaltozyma polyspora (strain ATCC 22028 / DSM 70294 / BCRC 21397 / CBS 2163 / NBRC 10782 / NRRL Y-8283 / UCD 57-17) (Kluyveromyces polysporus), this protein is Ribose-5-phosphate isomerase (RKI1).